Consider the following 545-residue polypeptide: CTP synthase (545 aa).

Residues 1-266 (MTTNYIFVTG…DDYICKRFSL (266 aa)) are amidoligase domain. Residue Ser14 participates in CTP binding. A UTP-binding site is contributed by Ser14. Residues 15-20 (SLGKGI) and Asp72 each bind ATP. Mg(2+) is bound by residues Asp72 and Glu140. Residues 147–149 (DIE), 187–192 (KTKPTQ), and Lys223 contribute to the CTP site. Residues 187–192 (KTKPTQ) and Lys223 each bind UTP. 239–241 (KDV) serves as a coordination point for ATP. In terms of domain architecture, Glutamine amidotransferase type-1 spans 291 to 542 (TIGMVGKYIE…VKAASEYQKR (252 aa)). Residue Gly352 participates in L-glutamine binding. Residue Cys379 is the Nucleophile; for glutamine hydrolysis of the active site. L-glutamine is bound by residues 380-383 (LGMQ), Glu403, and Arg470. Catalysis depends on residues His515 and Glu517.

This sequence belongs to the CTP synthase family. Homotetramer.

The enzyme catalyses UTP + L-glutamine + ATP + H2O = CTP + L-glutamate + ADP + phosphate + 2 H(+). The catalysed reaction is L-glutamine + H2O = L-glutamate + NH4(+). It carries out the reaction UTP + NH4(+) + ATP = CTP + ADP + phosphate + 2 H(+). The protein operates within pyrimidine metabolism; CTP biosynthesis via de novo pathway; CTP from UDP: step 2/2. Its activity is regulated as follows. Allosterically activated by GTP, when glutamine is the substrate; GTP has no effect on the reaction when ammonia is the substrate. The allosteric effector GTP functions by stabilizing the protein conformation that binds the tetrahedral intermediate(s) formed during glutamine hydrolysis. Inhibited by the product CTP, via allosteric rather than competitive inhibition. In terms of biological role, catalyzes the ATP-dependent amination of UTP to CTP with either L-glutamine or ammonia as the source of nitrogen. Regulates intracellular CTP levels through interactions with the four ribonucleotide triphosphates. The sequence is that of CTP synthase from Enterobacter sp. (strain 638).